The chain runs to 612 residues: Elongation factor 4 (612 aa).

A tr-type G domain is found at 11 to 193 (KHIRNFSIIA…KLVTDVPAPT (183 aa)). Residues 23-28 (DHGKST) and 140-143 (NKID) contribute to the GTP site.

It belongs to the TRAFAC class translation factor GTPase superfamily. Classic translation factor GTPase family. LepA subfamily.

It localises to the cell membrane. It carries out the reaction GTP + H2O = GDP + phosphate + H(+). Its function is as follows. Required for accurate and efficient protein synthesis under certain stress conditions. May act as a fidelity factor of the translation reaction, by catalyzing a one-codon backward translocation of tRNAs on improperly translocated ribosomes. Back-translocation proceeds from a post-translocation (POST) complex to a pre-translocation (PRE) complex, thus giving elongation factor G a second chance to translocate the tRNAs correctly. Binds to ribosomes in a GTP-dependent manner. In Latilactobacillus sakei subsp. sakei (strain 23K) (Lactobacillus sakei subsp. sakei), this protein is Elongation factor 4.